The primary structure comprises 1549 residues: Ferredoxin-dependent glutamate synthase (1549 aa).

Residue Cys-37 is the For GATase activity of the active site. One can recognise a Glutamine amidotransferase type-2 domain in the interval 37–435 (CGVGFIAHLD…PGEMIVLDLQ (399 aa)). 1116-1173 (LHEVHCLLVENNLREKVILRVDGGLRTGQDVVMAALLGADEYGFGTIAMIAGGCIMAR) contacts FMN. 3 residues coordinate [3Fe-4S] cluster: Cys-1169, Cys-1175, and Cys-1180.

This sequence belongs to the glutamate synthase family. As to quaternary structure, monomer. [3Fe-4S] cluster serves as cofactor. Requires FAD as cofactor. FMN is required as a cofactor.

It is found in the plastid. The protein localises to the chloroplast stroma. It carries out the reaction 2 oxidized [2Fe-2S]-[ferredoxin] + 2 L-glutamate = L-glutamine + 2 reduced [2Fe-2S]-[ferredoxin] + 2-oxoglutarate + 2 H(+). It functions in the pathway amino-acid biosynthesis; L-glutamate biosynthesis via GLT pathway; L-glutamate from 2-oxoglutarate and L-glutamine (ferredoxin route): step 1/1. Its pathway is energy metabolism; nitrogen metabolism. This chain is Ferredoxin-dependent glutamate synthase (gltB), found in Cyanidium caldarium (Red alga).